The following is a 315-amino-acid chain: Glycine--tRNA ligase alpha subunit (315 aa).

This sequence belongs to the class-II aminoacyl-tRNA synthetase family. In terms of assembly, tetramer of two alpha and two beta subunits.

Its subcellular location is the cytoplasm. The catalysed reaction is tRNA(Gly) + glycine + ATP = glycyl-tRNA(Gly) + AMP + diphosphate. The chain is Glycine--tRNA ligase alpha subunit from Ectopseudomonas mendocina (strain ymp) (Pseudomonas mendocina).